The primary structure comprises 284 residues: 4-hydroxybenzoate octaprenyltransferase (284 aa).

8 helical membrane-spanning segments follow: residues 18–38 (PIGT…AAEG), 42–62 (WHVL…GCVI), 93–113 (IILF…MNPL), 136–156 (HLPQ…AWAA), 161–181 (LPWV…AYDT), 209–229 (LIIG…GLHY), 233–253 (QSFY…QHLI), and 264–284 (AFLN…VAFW).

The protein belongs to the UbiA prenyltransferase family. The cofactor is Mg(2+).

The protein localises to the cell inner membrane. The enzyme catalyses all-trans-octaprenyl diphosphate + 4-hydroxybenzoate = 4-hydroxy-3-(all-trans-octaprenyl)benzoate + diphosphate. Its pathway is cofactor biosynthesis; ubiquinone biosynthesis. In terms of biological role, catalyzes the prenylation of para-hydroxybenzoate (PHB) with an all-trans polyprenyl group. Mediates the second step in the final reaction sequence of ubiquinone-8 (UQ-8) biosynthesis, which is the condensation of the polyisoprenoid side chain with PHB, generating the first membrane-bound Q intermediate 3-octaprenyl-4-hydroxybenzoate. The polypeptide is 4-hydroxybenzoate octaprenyltransferase (Vibrio vulnificus (strain CMCP6)).